The primary structure comprises 306 residues: uncharacterized protein (306 aa).

This is an uncharacterized protein from Treponema pallidum (strain Nichols).